Here is a 375-residue protein sequence, read N- to C-terminus: 4-hydroxy-3-methylbut-2-en-1-yl diphosphate synthase (flavodoxin) (375 aa).

The [4Fe-4S] cluster site is built by Cys-270, Cys-273, Cys-305, and Glu-312.

It belongs to the IspG family. Requires [4Fe-4S] cluster as cofactor.

The enzyme catalyses (2E)-4-hydroxy-3-methylbut-2-enyl diphosphate + oxidized [flavodoxin] + H2O + 2 H(+) = 2-C-methyl-D-erythritol 2,4-cyclic diphosphate + reduced [flavodoxin]. The protein operates within isoprenoid biosynthesis; isopentenyl diphosphate biosynthesis via DXP pathway; isopentenyl diphosphate from 1-deoxy-D-xylulose 5-phosphate: step 5/6. Its function is as follows. Converts 2C-methyl-D-erythritol 2,4-cyclodiphosphate (ME-2,4cPP) into 1-hydroxy-2-methyl-2-(E)-butenyl 4-diphosphate. The polypeptide is 4-hydroxy-3-methylbut-2-en-1-yl diphosphate synthase (flavodoxin) (Yersinia pseudotuberculosis serotype IB (strain PB1/+)).